We begin with the raw amino-acid sequence, 2263 residues long: Collagen alpha-6(VI) chain (2263 aa).

A signal peptide spans 1–19; that stretch reads MMLLILFLVIICSHISVNQ. Residues 20-1391 are nonhelical region; the sequence is DSGPEYADVV…TCCCLFCKCI (1372 aa). VWFA domains follow at residues 27-206, 229-411, 436-606, 622-791, and 809-982; these read DVVF…IKDV, DVVF…RNQI, DIYL…RNQV, DIMF…EDDL, and DVVF…FSDV. 5 N-linked (GlcNAc...) asparagine glycosylation sites follow: asparagine 198, asparagine 275, asparagine 288, asparagine 347, and asparagine 520. N-linked (GlcNAc...) asparagine glycosylation is found at asparagine 930 and asparagine 988. VWFA domains lie at 1000 to 1171 and 1187 to 1371; these read DLVF…NKRI and DVVV…GSRL. The N-linked (GlcNAc...) asparagine glycan is linked to asparagine 1290. The segment at 1392–1725 is triple-helical region; it reads GGDGTMGDPG…GRKGVKGAKG (334 aa). The segment at 1397–1723 is disordered; that stretch reads MGDPGPPGKR…PPGRKGVKGA (327 aa). Over residues 1498–1508 the composition is skewed to basic and acidic residues; it reads TPGDRGAKGLR. Positions 1508-1510 match the Cell attachment site motif; that stretch reads RGD. A compositionally biased stretch (basic residues) spans 1547–1559; the sequence is SRRKTAAHGRRGH. A compositionally biased stretch (gly residues) spans 1680–1689; it reads GDPGGPGETG. Residues 1726-2263 are nonhelical region; that stretch reads LASFSTCELI…MIESAPKQHD (538 aa). VWFA domains follow at residues 1757 to 1937 and 1965 to 2166; these read ELVF…ERLQ and DAAF…INSI.

It belongs to the type VI collagen family. In terms of assembly, trimers composed of three different chains: alpha-1(VI), alpha-2(VI), and alpha-3(VI) or alpha-5(VI) or alpha-6(VI). Prolines at the third position of the tripeptide repeating unit (G-X-Y) are hydroxylated in some or all of the chains.

The protein localises to the secreted. Its subcellular location is the extracellular space. It is found in the extracellular matrix. Collagen VI acts as a cell-binding protein. This Homo sapiens (Human) protein is Collagen alpha-6(VI) chain (COL6A6).